A 101-amino-acid chain; its full sequence is NADH-quinone oxidoreductase subunit K (101 aa).

3 consecutive transmembrane segments (helical) span residues Leu-4–Leu-24, Ile-30–Phe-50, and Phe-62–Val-82.

Belongs to the complex I subunit 4L family. In terms of assembly, NDH-1 is composed of 14 different subunits. Subunits NuoA, H, J, K, L, M, N constitute the membrane sector of the complex.

Its subcellular location is the cell inner membrane. It catalyses the reaction a quinone + NADH + 5 H(+)(in) = a quinol + NAD(+) + 4 H(+)(out). NDH-1 shuttles electrons from NADH, via FMN and iron-sulfur (Fe-S) centers, to quinones in the respiratory chain. The immediate electron acceptor for the enzyme in this species is believed to be ubiquinone. Couples the redox reaction to proton translocation (for every two electrons transferred, four hydrogen ions are translocated across the cytoplasmic membrane), and thus conserves the redox energy in a proton gradient. The chain is NADH-quinone oxidoreductase subunit K from Xylella fastidiosa (strain 9a5c).